A 395-amino-acid polypeptide reads, in one-letter code: Elongation factor Tu (395 aa).

In terms of domain architecture, tr-type G spans 10–204; the sequence is KPHLNIGTIG…TVDNYIKEPI (195 aa). Residues 19 to 26 form a G1 region; the sequence is GHVDHGKT. 19–26 serves as a coordination point for GTP; the sequence is GHVDHGKT. Threonine 26 lines the Mg(2+) pocket. Residues 60–64 are G2; sequence GITIN. Positions 81–84 are G3; the sequence is DCPG. Residues 81 to 85 and 136 to 139 each bind GTP; these read DCPGH and NKVD. The interval 136 to 139 is G4; it reads NKVD. The G5 stretch occupies residues 174–176; the sequence is SAL.

This sequence belongs to the TRAFAC class translation factor GTPase superfamily. Classic translation factor GTPase family. EF-Tu/EF-1A subfamily. Monomer.

It is found in the cytoplasm. The catalysed reaction is GTP + H2O = GDP + phosphate + H(+). Functionally, GTP hydrolase that promotes the GTP-dependent binding of aminoacyl-tRNA to the A-site of ribosomes during protein biosynthesis. The sequence is that of Elongation factor Tu from Karelsulcia muelleri (strain GWSS) (Sulcia muelleri).